We begin with the raw amino-acid sequence, 461 residues long: FAD-dependent monooxygenase nodY2 (461 aa).

Residues E48 and R136 each contribute to the FAD site. Residue R214 is part of the active site. The FAD site is built by D338 and G351.

It belongs to the paxM FAD-dependent monooxygenase family. FAD serves as cofactor.

Its pathway is secondary metabolite biosynthesis. In terms of biological role, FAD-dependent monooxygenase; part of the gene cluster that mediates the biosynthesis of the indole diterpenes nodulisporic acids (NA). Nodulisporic acid A (NAA) and its chemically modified derivatives are of particular significance because of their highly potent insecticidal activity against blood-feeding arthropods and lack of observable adverse effects on mammals, in particular the tremogenicity associated with the paspaline-derived IDTs is not observed. The geranylgeranyl diphosphate (GGPP) synthase ggs1, localized outside of the cluster, is proposed to catalyze the first step in nodulisporic acid biosynthesis via conversion of farnesyl pyrophosphate and isopentyl pyrophosphate into geranylgeranyl pyrophosphate (GGPP). Condensation of indole-3-glycerol phosphate with GGPP by the prenyl transferase nodC then forms 3-geranylgeranylindole (3-GGI). Epoxidation by the FAD-dependent monooxygenase nodM leads to a single-epoxidized-GGI that is substrate of the terpene cyclase nodB for cyclization to yield emindole SB. The terminal methyl carbon, C28, of emindole SB is then oxidized by the cytochrome P450 monooxygenase nodW to produce nodulisporic acid F (NAF), the pentacyclic core of NAA. NAF is converted to nodulisporic acid E (NAE) via prenylation. This step is probably performed by one of the indole diterpene prenyltransferases nodD1 or nodD2. Several oxidation steps performed by the FAD-linked oxidoreductase nodO and one of the cytochrome P450 monooxygenase nodR, nodX or nodZ further convert NAE to nodulisporic acid D (NAD). NAD is substrate of cytochrome P450 monooxygenase nodJ to produce the precursor of nodulisporic acid C (NAC), converted to NAC by one of the indole diterpene prenyltransferases nodD1 or nodD2. The FAD-dependent monooxygenase nodY2 then oxidizes NAC to nodulisporic acid B (NAB). Finally NAB is converted to NAA by one of the cytochrome P450 monooxygenases nodR, nodX or nodZ. This chain is FAD-dependent monooxygenase nodY2, found in Hypoxylon pulicicidum.